Consider the following 132-residue polypeptide: Small ribosomal subunit protein uS11 (132 aa).

Residues 1 to 16 (MAAGMKGKRSRRRKER) are compositionally biased toward basic residues. Residues 1–20 (MAAGMKGKRSRRRKERKNVE) are disordered.

Belongs to the universal ribosomal protein uS11 family. Part of the 30S ribosomal subunit. Interacts with proteins S7 and S18. Binds to IF-3.

Its function is as follows. Located on the platform of the 30S subunit, it bridges several disparate RNA helices of the 16S rRNA. Forms part of the Shine-Dalgarno cleft in the 70S ribosome. The sequence is that of Small ribosomal subunit protein uS11 from Clostridium botulinum (strain Kyoto / Type A2).